The chain runs to 545 residues: Afadin- and alpha-actinin-binding protein B (545 aa).

2 coiled-coil regions span residues 106–287 and 358–442; these read RSKE…SQRK and ARGD…AIRL. Positions 497 to 545 are disordered; it reads HDRHLASSGDHYQRPRKTLPITPSSKHSLTQRESVAWRDSSISPNGTDF. Polar residues-rich tracts occupy residues 517–529 and 536–545; these read ITPSSKHSLTQRE and SSISPNGTDF.

The protein belongs to the ADIP family. As to quaternary structure, interacts with WRAP73.

It is found in the cell junction. It localises to the adherens junction. The protein resides in the cytoplasm. Its subcellular location is the cytoskeleton. The protein localises to the microtubule organizing center. It is found in the centrosome. It localises to the centriolar satellite. Belongs to an adhesion system, which plays a role in the organization of homotypic, interneuronal and heterotypic cell-cell adherens junctions (AJs). Involved in cell movement. Acts as a centrosome maturation factor, probably by maintaining the integrity of the pericentriolar material and proper microtubule nucleation at mitotic spindle poles. The function seems to implicate at least in part WRAP73; the SSX2IP:WRAP73 complex is proposed to act as regulator of spindle anchoring at the mitotic centrosome. This Xenopus laevis (African clawed frog) protein is Afadin- and alpha-actinin-binding protein B (ssx2ip-b).